The sequence spans 471 residues: Putative F-box protein At5g36200 (471 aa).

Residues 1–46 (MAMSDLPNDLVEEIISRVPVKSIRAVSSTCKNWNTLSNDHSFTRKL) enclose the F-box domain.

The protein is Putative F-box protein At5g36200 of Arabidopsis thaliana (Mouse-ear cress).